Here is a 105-residue protein sequence, read N- to C-terminus: DNA-directed RNA polymerase subunit Rpo13 (105 aa).

2 stretches are compositionally biased toward basic and acidic residues: residues 1-10 and 70-80; these read MSEDDSKKEP and FDDVARSYSKA. Disordered stretches follow at residues 1 to 35 and 70 to 105; these read MSED…GGEF and FDDV…EEEE. Positions 81-97 are enriched in basic residues; it reads DKKKRRVEKKPKKGKVT.

Belongs to the archaeal Rpo13 RNA polymerase subunit family. In terms of assembly, part of the 13-subunit RNA polymerase.

The protein resides in the cytoplasm. The catalysed reaction is RNA(n) + a ribonucleoside 5'-triphosphate = RNA(n+1) + diphosphate. Functionally, DNA-dependent RNA polymerase catalyzes the transcription of DNA into RNA using the four ribonucleoside triphosphates as substrates. In vitro binds dsDNA but not ssDNA. The polypeptide is DNA-directed RNA polymerase subunit Rpo13 (Sulfolobus acidocaldarius (strain ATCC 33909 / DSM 639 / JCM 8929 / NBRC 15157 / NCIMB 11770)).